The sequence spans 404 residues: Zinc metalloprotease Rip1 (404 aa).

A helical transmembrane segment spans residues 1-21; that stretch reads MMFVTGIVLFALAILISVALH. His21 serves as a coordination point for Zn(2+). Glu22 is an active-site residue. Position 25 (His25) interacts with Zn(2+). The helical transmembrane segment at 104 to 124 threads the bilayer; sequence PGMNLAICLVLIYAIALVWGL. The 83-residue stretch at 121–203 folds into the PDZ domain; sequence VWGLPNLHPP…SVPIVVERDG (83 aa). Residue Asp202 participates in Zn(2+) binding. A run of 2 helical transmembrane segments spans residues 313 to 333 and 373 to 393; these read LWVAFWFFLAQLNLILAAINL and LLPATYVVLVLVVGYMLLTVT.

The protein belongs to the peptidase M50B family. Zn(2+) is required as a cofactor.

It localises to the cell membrane. Its function is as follows. A probable site-2 protease (S2P) that cleaves type-2 transmembrane proteins within their membrane-spanning domains. Degrades anti-sigma factors RskA, RslA and RsmA, releasing sigma factors SigK, SigL and SigM from the cellular membrane, activating signaling pathways. Does not act on RsdA. Regulates the composition of extractable mycolic acids in the cell envelope in response to changes in membrane fluidity. Mediates transcriptional regulation of mycolic acid biosynthetic genes in response to detergent. Probably also cleaves PbpB (PBP3, FtsI); this cleavage is inhibited by Wag31-PbpBI interaction. Regulated intramembrane proteolysis (RIP) occurs when an extracytoplasmic signal (possibly oxidative stress) triggers a concerted proteolytic cascade to transmit information and elicit cellular responses. The membrane-spanning regulatory substrate protein (includes anti-sigma factors RskA, RslA, RsmA, and PbpB) is first cut extracytoplasmically (site-1 protease, S1P), then within the membrane itself (site-2 protease, S2P, this entry), while cytoplasmic proteases finish degrading the regulatory protein, liberating the effector protein (ECF sigma factors SigK, SigL and SigM). The protein is Zinc metalloprotease Rip1 (rip1) of Mycobacterium tuberculosis (strain ATCC 35801 / TMC 107 / Erdman).